The primary structure comprises 157 residues: Crossover junction endodeoxyribonuclease RuvC (157 aa).

Catalysis depends on residues Asp7, Glu67, and Asp139. Mg(2+) is bound by residues Asp7, Glu67, and Asp139.

This sequence belongs to the RuvC family. As to quaternary structure, homodimer which binds Holliday junction (HJ) DNA. The HJ becomes 2-fold symmetrical on binding to RuvC with unstacked arms; it has a different conformation from HJ DNA in complex with RuvA. In the full resolvosome a probable DNA-RuvA(4)-RuvB(12)-RuvC(2) complex forms which resolves the HJ. It depends on Mg(2+) as a cofactor.

It is found in the cytoplasm. It catalyses the reaction Endonucleolytic cleavage at a junction such as a reciprocal single-stranded crossover between two homologous DNA duplexes (Holliday junction).. The RuvA-RuvB-RuvC complex processes Holliday junction (HJ) DNA during genetic recombination and DNA repair. Endonuclease that resolves HJ intermediates. Cleaves cruciform DNA by making single-stranded nicks across the HJ at symmetrical positions within the homologous arms, yielding a 5'-phosphate and a 3'-hydroxyl group; requires a central core of homology in the junction. The consensus cleavage sequence is 5'-(A/T)TT(C/G)-3'. Cleavage occurs on the 3'-side of the TT dinucleotide at the point of strand exchange. HJ branch migration catalyzed by RuvA-RuvB allows RuvC to scan DNA until it finds its consensus sequence, where it cleaves and resolves the cruciform DNA. This chain is Crossover junction endodeoxyribonuclease RuvC, found in Prochlorococcus marinus subsp. pastoris (strain CCMP1986 / NIES-2087 / MED4).